The primary structure comprises 240 residues: Probable transcriptional regulatory protein Nmul_A2722 (240 aa).

It belongs to the TACO1 family.

The protein localises to the cytoplasm. In Nitrosospira multiformis (strain ATCC 25196 / NCIMB 11849 / C 71), this protein is Probable transcriptional regulatory protein Nmul_A2722.